The chain runs to 87 residues: Putative phytosulfokines 4 (87 aa).

The first 23 residues, 1 to 23, serve as a signal peptide directing secretion; sequence MANLSTLITIALLLCATMLTCSA. The propeptide occupies 24 to 77; it reads RPEPAYFASFTTSPADTLSLEMIESKLHEVAGESCDKEDDEDCLVRRTLTAHLD. Sulfotyrosine is present on residues Y78 and Y80. The propeptide occupies 83–87; the sequence is KNNHH.

Belongs to the phytosulfokine family. Sulfation is important for activity and for the binding to a putative membrane receptor.

Its subcellular location is the secreted. Its function is as follows. Promotes plant cell differentiation, organogenesis and somatic embryogenesis as well as cell proliferation. This is Putative phytosulfokines 4 (PSK4) from Arabidopsis thaliana (Mouse-ear cress).